The sequence spans 201 residues: Recombination protein RecR (201 aa).

The C4-type zinc-finger motif lies at 59-74 (CEICGNMDTENICRIC). The Toprim domain maps to 82 to 177 (SIIAIVETVA…KISRLASGIP (96 aa)).

The protein belongs to the RecR family.

Its function is as follows. May play a role in DNA repair. It seems to be involved in an RecBC-independent recombinational process of DNA repair. It may act with RecF and RecO. The polypeptide is Recombination protein RecR (Rickettsia rickettsii (strain Iowa)).